The sequence spans 904 residues: Dynamin-like protein C (904 aa).

A coiled-coil region spans residues 44–102 (IAEAMALKMHEEEKKKREEKKRKRDNEELLSKQVRTKLENERKKLDDSESINASTNQEL). The disordered stretch occupies residues 53 to 93 (HEEEKKKREEKKRKRDNEELLSKQVRTKLENERKKLDDSES). The segment covering 67–90 (RDNEELLSKQVRTKLENERKKLDD) has biased composition (basic and acidic residues). Residues 119 to 441 (SFDTPELVVV…HEKYQQNLLP (323 aa)) enclose the Dynamin-type G domain. Positions 129–136 (GMQSDGKS) are G1 motif. 129–136 (GMQSDGKS) serves as a coordination point for GTP. A G2 motif region spans residues 155 to 157 (GTR). The disordered stretch occupies residues 169-227 (SKQQPSCRFKKEDYSNSYGGSSSSTSTTSGNSNHNTDKQQNVSSSQGGGGGSNNLNEDK). The span at 183–213 (SNSYGGSSSSTSTTSGNSNHNTDKQQNVSSS) shows a compositional bias: low complexity. Positions 278 to 281 (DTPG) are G3 motif. Residues 278 to 282 (DTPGF) and 343 to 346 (TKFD) contribute to the GTP site. The tract at residues 343–346 (TKFD) is G4 motif. The segment at 378-381 (LPLK) is G5 motif. A coiled-coil region spans residues 781–811 (EMFQLGLKELENKLHKLEFQLIDCKKNRDKF). Disordered stretches follow at residues 821-840 (SLNQ…ASSS) and 853-904 (NGKF…FDQN). Over residues 853–876 (NGKFSTPDKNSLTMSPFTSPFTQS) the composition is skewed to polar residues. The span at 877–891 (NYHQHNNNNYQINQQ) shows a compositional bias: low complexity.

The protein belongs to the TRAFAC class dynamin-like GTPase superfamily. Dynamin/Fzo/YdjA family.

It localises to the cytoplasm. The catalysed reaction is GTP + H2O = GDP + phosphate + H(+). Functionally, involved in cytokinesis. May hydrolyze GTP. The chain is Dynamin-like protein C (dlpC) from Dictyostelium discoideum (Social amoeba).